Reading from the N-terminus, the 251-residue chain is CDP-diacylglycerol pyrophosphatase (251 aa).

A helical transmembrane segment spans residues 4–24 (AGLLFLVMIVIAVVAAGIGYW).

Belongs to the Cdh family.

It is found in the cell inner membrane. It carries out the reaction a CDP-1,2-diacyl-sn-glycerol + H2O = a 1,2-diacyl-sn-glycero-3-phosphate + CMP + 2 H(+). It participates in phospholipid metabolism; CDP-diacylglycerol degradation; phosphatidate from CDP-diacylglycerol: step 1/1. This Escherichia coli O127:H6 (strain E2348/69 / EPEC) protein is CDP-diacylglycerol pyrophosphatase.